The following is a 1063-amino-acid chain: Presequence protease, mitochondrial (1063 aa).

The N-terminal 33 residues, 1–33 (MLRLANRVSRKDSGNLGIAQLKKRLLATSGVSQ), are a transit peptide targeting the mitochondrion. His-105 contributes to the Zn(2+) binding site. Glu-108 (proton acceptor) is an active-site residue. His-109 lines the Zn(2+) pocket. Glu-181 is an active-site residue. Glu-206 lines the Zn(2+) pocket.

It belongs to the peptidase M16 family. PreP subfamily. Monomer and homodimer; homodimerization is induced by binding of the substrate. The cofactor is Zn(2+).

It is found in the mitochondrion intermembrane space. Its subcellular location is the mitochondrion matrix. Functionally, degrades mitochondrial transit peptides after their cleavage in the intermembrane space or in the matrix, and presequence peptides; clearance of these peptides is required to keep the presequence processing machinery running. Preferentially cleaves the N-terminal side of paired basic amino acid residues. Also degrades other unstructured peptides. May function as an ATP-dependent peptidase as opposed to a metalloendopeptidase. In Debaryomyces hansenii (strain ATCC 36239 / CBS 767 / BCRC 21394 / JCM 1990 / NBRC 0083 / IGC 2968) (Yeast), this protein is Presequence protease, mitochondrial (CYM1).